Reading from the N-terminus, the 187-residue chain is Pre-mRNA-splicing factor cwf7 (187 aa).

The protein belongs to the SPF27 family. Belongs to the 40S cdc5-associated complex (or cwf complex), a spliceosome sub-complex reminiscent of a late-stage spliceosome composed of the U2, U5 and U6 snRNAs and at least brr2, cdc5, cwf2/prp3, cwf3/syf1, cwf4/syf3, cwf5/ecm2, spp42/cwf6, cwf7/spf27, cwf8, cwf9, cwf10, cwf11, cwf12, prp45/cwf13, cwf14, cwf15, cwf16, cwf17, cwf18, cwf19, cwf20, cwf21, cwf22, cwf23, cwf24, cwf25, cwf26, cyp7/cwf27, cwf28, cwf29/ist3, lea1, msl1, prp5/cwf1, prp10, prp12/sap130, prp17, prp22, sap61, sap62, sap114, sap145, slu7, smb1, smd1, smd3, smf1, smg1 and syf2.

The protein resides in the nucleus. Its function is as follows. Involved in mRNA splicing. The sequence is that of Pre-mRNA-splicing factor cwf7 (cwf7) from Schizosaccharomyces pombe (strain 972 / ATCC 24843) (Fission yeast).